We begin with the raw amino-acid sequence, 2290 residues long: Protein Ycf2 (2290 aa).

A disordered region spans residues 505–530 (GSNPTERSTRDQKSLKKQQDVSFVPP). The span at 511 to 523 (RSTRDQKSLKKQQ) shows a compositional bias: basic and acidic residues. 1639-1646 (GSIGTGRS) is an ATP binding site.

Belongs to the Ycf2 family.

Its subcellular location is the plastid. The protein resides in the chloroplast stroma. Its function is as follows. Probable ATPase of unknown function. Its presence in a non-photosynthetic plant (Epifagus virginiana) and experiments in tobacco indicate that it has an essential function which is probably not related to photosynthesis. This Ceratophyllum demersum (Rigid hornwort) protein is Protein Ycf2.